Consider the following 339-residue polypeptide: Paired box protein Pax-9 (339 aa).

Residues 2-128 (AFGEVNQLGG…SSISRILRNK (127 aa)) constitute a DNA-binding region (paired). The segment at 5–61 (EVNQLGGVFVNGRPLPNAIRLRIVELAQLGIRPCDISRQLRVSHGCVSKILARYNET) is PAI subdomain. The RED subdomain stretch occupies residues 80–128 (TVVKHIRTYKQRDPGIFAWEIRDRLLADGVCDKYNVPSVSSISRILRNK).

The protein localises to the nucleus. The polypeptide is Paired box protein Pax-9 (PAX9) (Gallus gallus (Chicken)).